We begin with the raw amino-acid sequence, 430 residues long: Adenylosuccinate synthetase (430 aa).

GTP is bound by residues 13-19 (GDEGKGK) and 41-43 (GHT). The active-site Proton acceptor is the Asp-14. Residues Asp-14 and Gly-41 each coordinate Mg(2+). IMP contacts are provided by residues 14–17 (DEGK), 39–42 (NAGH), Thr-130, Arg-144, Gln-225, Thr-240, and Arg-304. His-42 (proton donor) is an active-site residue. Residue 300 to 306 (STTGRAR) participates in substrate binding. Residues Arg-306, 332–334 (KLD), and 414–416 (STG) each bind GTP.

Belongs to the adenylosuccinate synthetase family. As to quaternary structure, homodimer. Mg(2+) serves as cofactor.

Its subcellular location is the cytoplasm. The enzyme catalyses IMP + L-aspartate + GTP = N(6)-(1,2-dicarboxyethyl)-AMP + GDP + phosphate + 2 H(+). The protein operates within purine metabolism; AMP biosynthesis via de novo pathway; AMP from IMP: step 1/2. Plays an important role in the de novo pathway of purine nucleotide biosynthesis. Catalyzes the first committed step in the biosynthesis of AMP from IMP. The polypeptide is Adenylosuccinate synthetase (Thioalkalivibrio sulfidiphilus (strain HL-EbGR7)).